Here is a 434-residue protein sequence, read N- to C-terminus: Alpha-enolase (434 aa).

At Ser2 the chain carries N-acetylserine. Lys5 carries the N6-acetyllysine modification. Ser27 is modified (phosphoserine). The epitope recognized by CAR and healthy patient antibodies stretch occupies residues 31-38 (FRAAVPSG). Mg(2+) is bound at residue Ser40. The residue at position 44 (Tyr44) is a Phosphotyrosine. Residues 56 to 63 (RYMGKGVS) form an epitope recognized by CAR antibodies region. Residue Lys60 is modified to N6-acetyllysine; alternate. Lys60 carries the post-translational modification N6-succinyllysine; alternate. 2 positions are modified to N6-acetyllysine: Lys64 and Lys71. Lys89 carries the post-translational modification N6-acetyllysine; alternate. Lys89 is modified (N6-succinyllysine; alternate). Lys92 and Lys126 each carry N6-acetyllysine. Residues 97 to 237 (MDGTENKSKF…KTAIGKAGYT (141 aa)) form a required for repression of c-myc promoter activity region. Positions 158 and 167 each coordinate substrate. Residues Lys193 and Lys199 each carry the N6-acetyllysine modification. Lys202 bears the N6-acetyllysine; alternate mark. A Glycyl lysine isopeptide (Lys-Gly) (interchain with G-Cter in SUMO2); alternate cross-link involves residue Lys202. Glu210 functions as the Proton donor in the catalytic mechanism. N6-acetyllysine; alternate is present on residues Lys228 and Lys233. N6-succinyllysine; alternate is present on Lys228. Lys228 is subject to N6-(2-hydroxyisobutyryl)lysine; alternate. At Lys233 the chain carries N6-malonyllysine; alternate. Asp245 is a binding site for Mg(2+). The residue at position 254 (Ser254) is a Phosphoserine. Lys256 bears the N6-acetyllysine mark. Ser263 and Ser272 each carry phosphoserine. Position 281 is an N6-acetyllysine; alternate (Lys281). Lys281 is subject to N6-(2-hydroxyisobutyryl)lysine; alternate. The residue at position 285 (Lys285) is an N6-acetyllysine. A Phosphotyrosine modification is found at Tyr287. Phosphoserine is present on Ser291. Residues Glu293 and Asp318 each contribute to the Mg(2+) site. Substrate is bound by residues Glu293 and Asp318. N6-acetyllysine is present on residues Lys335 and Lys343. Lys343 acts as the Proton acceptor in catalysis. Substrate-binding positions include 370 to 373 (SHRS) and Lys394. The segment at 405–434 (AKYNQLLRIEEELGSKAKFAGRNFRNPLAK) is required for interaction with PLG. Lys406 bears the N6-acetyllysine mark. At Lys420 the chain carries N6-acetyllysine; alternate. An N6-succinyllysine; alternate modification is found at Lys420. Lys420 carries the post-translational modification N6-malonyllysine; alternate.

This sequence belongs to the enolase family. As to quaternary structure, mammalian enolase is composed of 3 isozyme subunits, alpha, beta and gamma, which can form homodimers or heterodimers which are cell-type and development-specific. ENO1 interacts with PLG in the neuronal plasma membrane and promotes its activation. The C-terminal lysine is required for this binding. Isoform MBP-1 interacts with TRAPPC2B. Interacts with ENO4 and PGAM2. Interacts with CMTM6. Mg(2+) serves as cofactor. Post-translationally, ISGylated. Lysine 2-hydroxyisobutyrylation (Khib) by p300/EP300 activates the phosphopyruvate hydratase activity. In terms of tissue distribution, the alpha/alpha homodimer is expressed in embryo and in most adult tissues. The alpha/beta heterodimer and the beta/beta homodimer are found in striated muscle, and the alpha/gamma heterodimer and the gamma/gamma homodimer in neurons.

It is found in the cytoplasm. The protein localises to the cell membrane. Its subcellular location is the myofibril. It localises to the sarcomere. The protein resides in the m line. It is found in the nucleus. The catalysed reaction is (2R)-2-phosphoglycerate = phosphoenolpyruvate + H2O. The protein operates within carbohydrate degradation; glycolysis; pyruvate from D-glyceraldehyde 3-phosphate: step 4/5. Functionally, glycolytic enzyme the catalyzes the conversion of 2-phosphoglycerate to phosphoenolpyruvate. In addition to glycolysis, involved in various processes such as growth control, hypoxia tolerance and allergic responses. May also function in the intravascular and pericellular fibrinolytic system due to its ability to serve as a receptor and activator of plasminogen on the cell surface of several cell-types such as leukocytes and neurons. Stimulates immunoglobulin production. In terms of biological role, binds to the myc promoter and acts as a transcriptional repressor. May be a tumor suppressor. The sequence is that of Alpha-enolase (ENO1) from Homo sapiens (Human).